We begin with the raw amino-acid sequence, 351 residues long: Nitronate monooxygenase (351 aa).

Residues Leu21, Asn69, Gln176, Gly181, Gly218, and 237–240 (QMGT) each bind FMN.

Belongs to the nitronate monooxygenase family. NMO class I subfamily. Requires FMN as cofactor.

The catalysed reaction is 3 propionate 3-nitronate + 3 O2 + H2O = 3 3-oxopropanoate + 2 nitrate + nitrite + H2O2 + 3 H(+). In terms of biological role, nitronate monooxygenase that uses molecular oxygen to catalyze the oxidative denitrification of alkyl nitronates. The toxin propionate 3-nitronate (P3N) is the best substrate (and the presumed physiological substrate), but this enzyme is also active on other primary and secondary nitronates such as propyl-1-nitronate, ethylnitronate, pentyl-1-nitronate, butyl-1-nitronate and propyl-2-nitronate. Is likely involved in the degradation of P3N, that allows P.aeruginosa PAO1 to grow on 3-nitropropionate/P3N as the sole nitrogen source. Also functions in the detoxification of P3N, a metabolic poison produced by plants and fungi as a defense mechanism. Cannot oxidize nitroalkanes such as 3-nitropropionate, nitroethane, 1-nitropropane, 1-nitrobutane, 1-nitropentane, or 2-nitropropane. This is Nitronate monooxygenase from Pseudomonas aeruginosa (strain ATCC 15692 / DSM 22644 / CIP 104116 / JCM 14847 / LMG 12228 / 1C / PRS 101 / PAO1).